The sequence spans 82 residues: Small ribosomal subunit protein bS16 (82 aa).

Belongs to the bacterial ribosomal protein bS16 family.

The polypeptide is Small ribosomal subunit protein bS16 (Haemophilus ducreyi (strain 35000HP / ATCC 700724)).